The chain runs to 186 residues: Threonylcarbamoyl-AMP synthase (186 aa).

Positions 3–186 (ELTLDSAVAT…DALSGNVLRS (184 aa)) constitute a YrdC-like domain.

Belongs to the SUA5 family. TsaC subfamily.

It localises to the cytoplasm. The catalysed reaction is L-threonine + hydrogencarbonate + ATP = L-threonylcarbamoyladenylate + diphosphate + H2O. Its function is as follows. Required for the formation of a threonylcarbamoyl group on adenosine at position 37 (t(6)A37) in tRNAs that read codons beginning with adenine. Catalyzes the conversion of L-threonine, HCO(3)(-)/CO(2) and ATP to give threonylcarbamoyl-AMP (TC-AMP) as the acyladenylate intermediate, with the release of diphosphate. This is Threonylcarbamoyl-AMP synthase from Stenotrophomonas maltophilia (strain K279a).